A 198-amino-acid polypeptide reads, in one-letter code: Na(+)-translocating NADH-quinone reductase subunit E (198 aa).

6 helical membrane-spanning segments follow: residues 11-31, 35-55, 77-97, 110-130, 140-160, and 176-196; these read AVFV…FLAV, VSTA…SVPV, FLNF…LEMI, GIFL…SFMV, VVYG…MAGI, and LGIT…FSGV.

The protein belongs to the NqrDE/RnfAE family. As to quaternary structure, composed of six subunits; NqrA, NqrB, NqrC, NqrD, NqrE and NqrF.

Its subcellular location is the cell inner membrane. It carries out the reaction a ubiquinone + n Na(+)(in) + NADH + H(+) = a ubiquinol + n Na(+)(out) + NAD(+). In terms of biological role, NQR complex catalyzes the reduction of ubiquinone-1 to ubiquinol by two successive reactions, coupled with the transport of Na(+) ions from the cytoplasm to the periplasm. NqrA to NqrE are probably involved in the second step, the conversion of ubisemiquinone to ubiquinol. The chain is Na(+)-translocating NADH-quinone reductase subunit E from Serratia proteamaculans (strain 568).